The sequence spans 315 residues: Protein rlx (315 aa).

The tract at residues 263-315 (TEQLKQRRVERAQETKQAHSKISSRDTRESENQRERAKGNNIRIERGDEGLSR) is disordered.

This protein is probably required for relaxation complex formation and plasmid mobilization by conjugative plasmids. In Staphylococcus aureus, this protein is Protein rlx (rlx).